A 215-amino-acid polypeptide reads, in one-letter code: Large ribosomal subunit protein uL4 (215 aa).

Residues 46–76 are disordered; the sequence is TAKSKNRAEVSGGGRKPWAQKGGGRARAGSI. Residues 56-71 are compositionally biased toward gly residues; that stretch reads SGGGRKPWAQKGGGRA.

It belongs to the universal ribosomal protein uL4 family. Part of the 50S ribosomal subunit.

Its function is as follows. One of the primary rRNA binding proteins, this protein initially binds near the 5'-end of the 23S rRNA. It is important during the early stages of 50S assembly. It makes multiple contacts with different domains of the 23S rRNA in the assembled 50S subunit and ribosome. Forms part of the polypeptide exit tunnel. In Helicobacter acinonychis (strain Sheeba), this protein is Large ribosomal subunit protein uL4.